The chain runs to 844 residues: Beta-mannosidase B (844 aa).

Glu-432 serves as the catalytic Proton donor.

The protein belongs to the glycosyl hydrolase 2 family. Beta-mannosidase B subfamily.

It carries out the reaction Hydrolysis of terminal, non-reducing beta-D-mannose residues in beta-D-mannosides.. Its pathway is glycan metabolism; N-glycan degradation. Its function is as follows. Exoglycosidase that cleaves the single beta-linked mannose residue from the non-reducing end of beta-mannosidic oligosaccharides of various complexity and length. Prefers mannobiose over mannotriose and has no activity against polymeric mannan. Is also severely restricted by galactosyl substitutions at the +1 subsite. This Aspergillus oryzae (strain ATCC 42149 / RIB 40) (Yellow koji mold) protein is Beta-mannosidase B (mndB).